We begin with the raw amino-acid sequence, 391 residues long: Argininosuccinate synthase (391 aa).

Position 6–14 (6–14 (AYSGGLDTT)) interacts with ATP. Tyrosine 84 serves as a coordination point for L-citrulline. ATP is bound at residue glycine 114. Residues threonine 116, asparagine 120, and aspartate 121 each coordinate L-aspartate. Asparagine 120 serves as a coordination point for L-citrulline. Residues arginine 124, serine 171, serine 180, glutamate 253, and tyrosine 265 each contribute to the L-citrulline site.

It belongs to the argininosuccinate synthase family. Type 1 subfamily. In terms of assembly, homotetramer.

It is found in the cytoplasm. The enzyme catalyses L-citrulline + L-aspartate + ATP = 2-(N(omega)-L-arginino)succinate + AMP + diphosphate + H(+). It functions in the pathway amino-acid biosynthesis; L-arginine biosynthesis; L-arginine from L-ornithine and carbamoyl phosphate: step 2/3. This is Argininosuccinate synthase from Saccharolobus solfataricus (strain ATCC 35092 / DSM 1617 / JCM 11322 / P2) (Sulfolobus solfataricus).